The following is a 280-amino-acid chain: MAFSGHHARKRFAQHWLIDAAVLTQILDAADVQPDDRLLEVGPGRGALTERLLASSASAVHAVELDRDLVSGLRQRFADQARFSLQEGDVLSVPLTLADGRAANKVVANIPYNITGPLLERLLGRLDRPVDHPYQRLVLLLQKEVAQRIRALPGQSCFSALSVRLQLLAHCTTVCPVPPRSFKPPPKVHSEVILIEPLAPEQRLEPLLAKRVESLLRQAFLARRKMLRNTLAKVLPAAELNALADDLGISLQQRPQELSPATWVELARGLNRADLVDPEP.

Residues H15, L17, G42, E64, D89, and N109 each coordinate S-adenosyl-L-methionine.

Belongs to the class I-like SAM-binding methyltransferase superfamily. rRNA adenine N(6)-methyltransferase family. RsmA subfamily.

It is found in the cytoplasm. It carries out the reaction adenosine(1518)/adenosine(1519) in 16S rRNA + 4 S-adenosyl-L-methionine = N(6)-dimethyladenosine(1518)/N(6)-dimethyladenosine(1519) in 16S rRNA + 4 S-adenosyl-L-homocysteine + 4 H(+). In terms of biological role, specifically dimethylates two adjacent adenosines (A1518 and A1519) in the loop of a conserved hairpin near the 3'-end of 16S rRNA in the 30S particle. May play a critical role in biogenesis of 30S subunits. This chain is Ribosomal RNA small subunit methyltransferase A, found in Prochlorococcus marinus (strain MIT 9303).